Reading from the N-terminus, the 956-residue chain is Probable hypoxanthine oxidase XdhD (956 aa).

Mo-molybdopterin contacts are provided by glutamine 414, phenylalanine 445, and alanine 727.

This sequence belongs to the xanthine dehydrogenase family. It depends on [2Fe-2S] cluster as a cofactor. Requires Mo-molybdopterin as cofactor.

Functionally, probably has no xanthine dehydrogenase activity; however deletion results in increased adenine sensitivity, suggesting that this protein contributes to the conversion of adenine to guanine nucleotides during purine salvage. This chain is Probable hypoxanthine oxidase XdhD (xdhD), found in Escherichia coli (strain K12).